A 652-amino-acid polypeptide reads, in one-letter code: Acetyl-coenzyme A synthetase (652 aa).

CoA-binding positions include 189-192 (RGGK) and S311. ATP contacts are provided by residues 387-389 (GEP), 411-416 (DTWWQT), D500, and R515. CoA is bound at residue S523. R526 provides a ligand contact to ATP. Mg(2+)-binding residues include V537, H539, and I542. Residue K584 coordinates CoA. Position 609 is an N6-acetyllysine (K609).

The protein belongs to the ATP-dependent AMP-binding enzyme family. The cofactor is Mg(2+). In terms of processing, acetylated. Deacetylation by the SIR2-homolog deacetylase activates the enzyme.

The enzyme catalyses acetate + ATP + CoA = acetyl-CoA + AMP + diphosphate. Its function is as follows. Catalyzes the conversion of acetate into acetyl-CoA (AcCoA), an essential intermediate at the junction of anabolic and catabolic pathways. AcsA undergoes a two-step reaction. In the first half reaction, AcsA combines acetate with ATP to form acetyl-adenylate (AcAMP) intermediate. In the second half reaction, it can then transfer the acetyl group from AcAMP to the sulfhydryl group of CoA, forming the product AcCoA. This chain is Acetyl-coenzyme A synthetase, found in Bartonella quintana (strain Toulouse) (Rochalimaea quintana).